Consider the following 390-residue polypeptide: Cell adhesion molecule 4 (390 aa).

The first 27 residues, 1–27 (MAPALTALNRCFVLGILLLVTAGTAFS), serve as a signal peptide directing secretion. Positions 28 to 122 (QEVQAENVTV…DTHHQIATLT (95 aa)) constitute an Ig-like V-type domain. Over 28–326 (QEVQAENVTV…IEAQTQVPYA (299 aa)) the chain is Extracellular. N-linked (GlcNAc...) asparagine glycans are attached at residues asparagine 34 and asparagine 70. Disulfide bonds link cysteine 47–cysteine 107, cysteine 148–cysteine 202, and cysteine 247–cysteine 293. Ig-like C2-type domains lie at 127–219 (PDNP…TQYE) and 226–309 (PTAS…YVLV). Asparagine 264 and asparagine 288 each carry an N-linked (GlcNAc...) asparagine glycan. Residues 327–347 (VIGGILALLVFLVICILIVMV) traverse the membrane as a helical segment. Residues 348–390 (WCSVRQKGSYLTHEASGLDEHGEAREAFLNGGENHKRKEEFFI) lie on the Cytoplasmic side of the membrane.

The protein belongs to the nectin family.

Its subcellular location is the membrane. In terms of biological role, involved in the cell-cell adhesion. This Xenopus laevis (African clawed frog) protein is Cell adhesion molecule 4 (cadm4).